The primary structure comprises 751 residues: Zinc finger protein 337 (751 aa).

The KRAB domain maps to 12 to 83 (LAFGDVTVDF…ERRRRPGPCA (72 aa)). Residues 101 to 116 (QRQQQLQFSDQSFQSD) show a composition bias toward low complexity. The segment at 101 to 163 (QRQQQLQFSD…SSQGQRENPT (63 aa)) is disordered. Residues 180–202 (FKCAERGQDFSRKMMVIIHKKAH) form a C2H2-type 1; degenerate zinc finger. 9 consecutive C2H2-type zinc fingers follow at residues 208–230 (FTCRECHQGFRDESALLLHQNTH), 236–258 (YVCSVCGRGFSLKANLLRHQRTH), 264–286 (FLCKVCGRGYTSKSYLTVHERTH), 292–314 (YECQECGRRFNDKSSYNKHLKAH), 320–342 (FVCKECGRGYTNKSYFVVHKRIH), 348–370 (YRCQECGRGFSNKSHLITHQRTH), 376–398 (FACRQCKQSFSVKGSLLRHQRTH), 404–426 (FVCKDCERSFSQKSTLVYHQRTH), and 432–454 (FVCRECGQGFIQKSTLVKHQITH). Lys-458 is covalently cross-linked (Glycyl lysine isopeptide (Lys-Gly) (interchain with G-Cter in SUMO2)). 10 consecutive C2H2-type zinc fingers follow at residues 460 to 482 (FVCKDCGRGFIQKSTFTLHQRTH), 488 to 510 (YGCRECGRRFRDKSSYNKHLRAH), 516 to 538 (FFCRDCGRGFTLKPNLTIHQRTH), 544 to 566 (FMCKQCEKSFSLKANLLRHQWTH), 572 to 594 (FNCKDCGRGFILKSTLLFHQKTH), 600 to 622 (FICSECGQGFIWKSNLVKHQLAH), 628 to 650 (FVCKECGRGFNWKGNLLTHQRTH), 656 to 679 (FVCNVCGQGFSWKRSLTRHHWRIH), 685 to 707 (FVCQECKRGYTSKSDLTVHERIH), and 713 to 735 (YECQECGRKFSNKSYYSKHLKRH).

This sequence belongs to the krueppel C2H2-type zinc-finger protein family.

The protein localises to the nucleus. Functionally, may be involved in transcriptional regulation. This chain is Zinc finger protein 337 (ZNF337), found in Homo sapiens (Human).